The following is a 451-amino-acid chain: F-box/LRR-repeat protein 13 (451 aa).

Residues 17–70 (VDWISKLPDCLLCEVLLNLPTKDVVKTSVLSRRWRNLWKHVPGLDLDNTDFQEF) form the F-box domain. 4 LRR repeats span residues 128–155 (DDSY…KLCG), 177–202 (TKFA…TIER), 224–251 (VADS…RLSD), and 335–363 (CVEF…VVKS). Residues 370 to 421 (GENIILPGPRRFLSSLEYVKIERPLKGEAMEMKLVSYLLENSTILKKLTLCL) form the FBD domain.

This Arabidopsis thaliana (Mouse-ear cress) protein is F-box/LRR-repeat protein 13 (FBL13).